A 258-amino-acid chain; its full sequence is MLAKRIIPCLDVRDGQVVKGVQFRNHEIIGDIVPLAKRYAEEGADELVFYDITASSDGRVVDKSWVSRVAEVIDIPFCVAGGIKSLEDAAKILSFGADKISINSPALADPTLITRLADRFGVQCIVVGIDTWYDAETGKYHVNQYTGDESRTRVTQWETLDWVEEVQKRGAGEIVLNMMNQDGVRNGYDLDQLKKVREVCHVPLIASGGAGTMEHFLEAFRDADVDGALAASVFHKQIINISELKAYLASQGVEIRIC.

Residues D11 and D130 contribute to the active site.

The protein belongs to the HisA/HisF family. As to quaternary structure, heterodimer of HisH and HisF.

The protein resides in the cytoplasm. The enzyme catalyses 5-[(5-phospho-1-deoxy-D-ribulos-1-ylimino)methylamino]-1-(5-phospho-beta-D-ribosyl)imidazole-4-carboxamide + L-glutamine = D-erythro-1-(imidazol-4-yl)glycerol 3-phosphate + 5-amino-1-(5-phospho-beta-D-ribosyl)imidazole-4-carboxamide + L-glutamate + H(+). Its pathway is amino-acid biosynthesis; L-histidine biosynthesis; L-histidine from 5-phospho-alpha-D-ribose 1-diphosphate: step 5/9. In terms of biological role, IGPS catalyzes the conversion of PRFAR and glutamine to IGP, AICAR and glutamate. The HisF subunit catalyzes the cyclization activity that produces IGP and AICAR from PRFAR using the ammonia provided by the HisH subunit. The sequence is that of Imidazole glycerol phosphate synthase subunit HisF from Escherichia coli O17:K52:H18 (strain UMN026 / ExPEC).